The following is a 264-amino-acid chain: Glutamate racemase (264 aa).

Residues 10–11 (DS) and 42–43 (YG) contribute to the substrate site. C73 serves as the catalytic Proton donor/acceptor. Residue 74–75 (NT) participates in substrate binding. Catalysis depends on C183, which acts as the Proton donor/acceptor. 184–185 (TH) lines the substrate pocket.

Belongs to the aspartate/glutamate racemases family.

The enzyme catalyses L-glutamate = D-glutamate. It participates in cell wall biogenesis; peptidoglycan biosynthesis. In terms of biological role, provides the (R)-glutamate required for cell wall biosynthesis. The sequence is that of Glutamate racemase from Streptococcus pyogenes serotype M49 (strain NZ131).